We begin with the raw amino-acid sequence, 401 residues long: Adenosine 3'-phospho 5'-phosphosulfate transporter 2 (401 aa).

2 N-linked (GlcNAc...) asparagine glycosylation sites follow: Asn12 and Asn71. 6 consecutive transmembrane segments (helical) span residues 78–98 (LTQFFICVAGVFVFYLIYGYL), 114–134 (YLTLVQFAFYSIFGLIELQLI), 147–167 (MIIAFLTVGTMGLSNTSLGYL), 170–190 (PTQVIFKCCKLIPVMLGGVFI), 196–216 (NVADVSAAICMSLGLIWFTLA), and 223–243 (NFNLTGVVLISLALCADAVIG). Asn254 is a glycosylation site (N-linked (GlcNAc...) asparagine). A run of 4 helical transmembrane segments spans residues 267–287 (IGFVYILLGLTCTSGLGPAVT), 298–317 (GYAFLFSLTGYFGISFVLAL), 324–346 (LIAVTVTTGRKAMTIVLSFIFFA), and 349–369 (FTFQYVWSGLLVVLGIFLNVY).

It belongs to the nucleotide-sugar transporter family. SLC35B subfamily. In terms of tissue distribution, preferentially and highly expressed in colon.

Its subcellular location is the golgi apparatus membrane. It catalyses the reaction 3'-phosphoadenylyl sulfate(in) + adenosine 3',5'-bisphosphate(out) = 3'-phosphoadenylyl sulfate(out) + adenosine 3',5'-bisphosphate(in). Probably functions as a 3'-phosphoadenylyl sulfate:adenosine 3',5'-bisphosphate antiporter at the Golgi membranes. Mediates the transport from the cytosol into the lumen of the Golgi of 3'-phosphoadenylyl sulfate/adenosine 3'-phospho 5'-phosphosulfate (PAPS), a universal sulfuryl donor for sulfation events that take place in that compartment. The chain is Adenosine 3'-phospho 5'-phosphosulfate transporter 2 from Homo sapiens (Human).